The following is a 306-amino-acid chain: MPIVIPKDLPATETLENENIFVITEHRAIHQDIRPLKIAIVNLMPKKIETETQLLRLLGNIPIQVSIDLIHPKTHHSKNISEKHLLSFYKTIDDIKNEKFDGMIITGAPVEQIAFEDVDYFQELKTIMDFSVTNVFSTLHICWGAQAALYYHYNINKNILPKKVFGVFSHHININKGTVKLLRGFDDKFYVPHSRHTEVKKEDIEKVPELEIFAESNEVGPYIIASKNGRQIFITGHPEYDANTLKSEYYRDINLGKHIEIPKNYFKNNNPREELIANWRGHANLLFSNWLNYYVYQETPYSYISI.

Catalysis depends on Cys-142, which acts as the Acyl-thioester intermediate. Positions 163 and 194 each coordinate substrate. His-237 functions as the Proton acceptor in the catalytic mechanism. Glu-239 is an active-site residue. Residue Arg-251 coordinates substrate.

The protein belongs to the MetA family.

Its subcellular location is the cytoplasm. The enzyme catalyses L-homoserine + acetyl-CoA = O-acetyl-L-homoserine + CoA. It participates in amino-acid biosynthesis; L-methionine biosynthesis via de novo pathway; O-acetyl-L-homoserine from L-homoserine: step 1/1. Functionally, transfers an acetyl group from acetyl-CoA to L-homoserine, forming acetyl-L-homoserine. The polypeptide is Homoserine O-acetyltransferase (Clostridium tetani (strain Massachusetts / E88)).